The chain runs to 376 residues: Cyclin-dependent kinase 9-A (376 aa).

Residues tyrosine 19–phenylalanine 319 form the Protein kinase domain. Residues isoleucine 25–valine 33 and lysine 48 contribute to the ATP site. Catalysis depends on aspartate 153, which acts as the Proton acceptor. The disordered stretch occupies residues proline 345–phenylalanine 376. Residues proline 354–glutamine 369 show a composition bias toward low complexity.

Belongs to the protein kinase superfamily. CMGC Ser/Thr protein kinase family. CDC2/CDKX subfamily. Associates with cyclin-T to form P-TEFb.

Its subcellular location is the nucleus. The enzyme catalyses L-seryl-[protein] + ATP = O-phospho-L-seryl-[protein] + ADP + H(+). It catalyses the reaction L-threonyl-[protein] + ATP = O-phospho-L-threonyl-[protein] + ADP + H(+). It carries out the reaction [DNA-directed RNA polymerase] + ATP = phospho-[DNA-directed RNA polymerase] + ADP + H(+). Member of the cyclin-dependent kinase pair (CDK9/cyclin-T) complex, also called positive transcription elongation factor B (P-TEFb), which is proposed to facilitate the transition from abortive to production elongation by phosphorylating the CTD (C-terminal domain) of the large subunit of RNA polymerase II (RNAP II) and SUPT5H. In Xenopus laevis (African clawed frog), this protein is Cyclin-dependent kinase 9-A (cdk9-a).